The chain runs to 127 residues: Snaclec macrovipecetin subunit beta (127 aa).

Disulfide bonds link cysteine 4–cysteine 15, cysteine 32–cysteine 121, and cysteine 98–cysteine 113. A C-type lectin domain is found at tyrosine 11–lysine 122.

In terms of assembly, heterodimer of subunits alpha and beta; disulfide-linked. Expressed by the venom gland.

It localises to the secreted. Interferes with one step of hemostasis (modulation of platelet aggregation, or coagulation cascade, for example). This chain is Snaclec macrovipecetin subunit beta, found in Macrovipera lebetinus (Levantine viper).